Here is a 207-residue protein sequence, read N- to C-terminus: Ribosomal RNA large subunit methyltransferase E (207 aa).

Residues glycine 60, tryptophan 62, aspartate 80, aspartate 96, and aspartate 121 each contribute to the S-adenosyl-L-methionine site. Catalysis depends on lysine 161, which acts as the Proton acceptor.

The protein belongs to the class I-like SAM-binding methyltransferase superfamily. RNA methyltransferase RlmE family.

It is found in the cytoplasm. The enzyme catalyses uridine(2552) in 23S rRNA + S-adenosyl-L-methionine = 2'-O-methyluridine(2552) in 23S rRNA + S-adenosyl-L-homocysteine + H(+). Specifically methylates the uridine in position 2552 of 23S rRNA at the 2'-O position of the ribose in the fully assembled 50S ribosomal subunit. This is Ribosomal RNA large subunit methyltransferase E from Azotobacter vinelandii (strain DJ / ATCC BAA-1303).